Reading from the N-terminus, the 327-residue chain is GPI-linked NAD(P)(+)--arginine ADP-ribosyltransferase 1 (327 aa).

The signal sequence occupies residues 1–22 (MQMPAMMSLLLVSVGLMEALQA). Cystine bridges form between Cys-53–Cys-277 and Cys-174–Cys-224. Asn-65 carries an N-linked (GlcNAc...) asparagine glycan. Positions 73-273 (QVYADSWTLA…IYLRALGKHS (201 aa)) constitute a TR mART core domain. 2 residues coordinate NAD(+): Tyr-121 and Arg-179. Residues Arg-179 and Ser-202 contribute to the active site. Ser-233 lines the NAD(+) pocket. Glu-240 is a catalytic residue. N-linked (GlcNAc...) asparagine glycosylation occurs at Asn-253. A lipid anchor (GPI-anchor amidated serine) is attached at Ser-295. Residues 296 to 327 (AMGQSPLSAVWSLLLLLWFLVVRAFPDGPGLL) constitute a propeptide, removed in mature form.

This sequence belongs to the Arg-specific ADP-ribosyltransferase family.

It is found in the sarcoplasmic reticulum membrane. It carries out the reaction L-arginyl-[protein] + NAD(+) = N(omega)-(ADP-D-ribosyl)-L-arginyl-[protein] + nicotinamide + H(+). In terms of biological role, has ADP-ribosyltransferase activity toward GLP1R. This Homo sapiens (Human) protein is GPI-linked NAD(P)(+)--arginine ADP-ribosyltransferase 1 (ART1).